The sequence spans 130 residues: Small ribosomal subunit protein uS9 (130 aa).

Belongs to the universal ribosomal protein uS9 family.

This chain is Small ribosomal subunit protein uS9, found in Paracidovorax citrulli (strain AAC00-1) (Acidovorax citrulli).